The following is a 110-amino-acid chain: MKRILGALLGLLSAQVCCVRGIQVEQSPPDLILQEGANSTLRCNFSDSVNNLQWFHQNPWGQLINLFYIPSGTKQNGRLSATTVATERYSLLYISSSQTTDSGVYFCAVE.

The signal sequence occupies residues 1 to 21 (MKRILGALLGLLSAQVCCVRG). In terms of domain architecture, Ig-like spans 22 to 110 (IQVEQSPPDL…DSGVYFCAVE (89 aa)). N38 and N44 each carry an N-linked (GlcNAc...) asparagine glycan. C43 and C107 are disulfide-bonded.

Alpha-beta TR is a heterodimer composed of an alpha and beta chain; disulfide-linked. The alpha-beta TR is associated with the transmembrane signaling CD3 coreceptor proteins to form the TR-CD3 (TcR or TCR). The assembly of alpha-beta TR heterodimers with CD3 occurs in the endoplasmic reticulum where a single alpha-beta TR heterodimer associates with one CD3D-CD3E heterodimer, one CD3G-CD3E heterodimer and one CD247 homodimer forming a stable octameric structure. CD3D-CD3E and CD3G-CD3E heterodimers preferentially associate with TR alpha and TR beta chains, respectively. The association of the CD247 homodimer is the last step of TcR assembly in the endoplasmic reticulum and is required for transport to the cell surface.

The protein resides in the cell membrane. Functionally, v region of the variable domain of T cell receptor (TR) alpha chain that participates in the antigen recognition. Alpha-beta T cell receptors are antigen specific receptors which are essential to the immune response and are present on the cell surface of T lymphocytes. Recognize peptide-major histocompatibility (MH) (pMH) complexes that are displayed by antigen presenting cells (APC), a prerequisite for efficient T cell adaptive immunity against pathogens. Binding of alpha-beta TR to pMH complex initiates TR-CD3 clustering on the cell surface and intracellular activation of LCK that phosphorylates the ITAM motifs of CD3G, CD3D, CD3E and CD247 enabling the recruitment of ZAP70. In turn ZAP70 phosphorylates LAT, which recruits numerous signaling molecules to form the LAT signalosome. The LAT signalosome propagates signal branching to three major signaling pathways, the calcium, the mitogen-activated protein kinase (MAPK) kinase and the nuclear factor NF-kappa-B (NF-kB) pathways, leading to the mobilization of transcription factors that are critical for gene expression and essential for T cell growth and differentiation. The T cell repertoire is generated in the thymus, by V-(D)-J rearrangement. This repertoire is then shaped by intrathymic selection events to generate a peripheral T cell pool of self-MH restricted, non-autoaggressive T cells. Post-thymic interaction of alpha-beta TR with the pMH complexes shapes TR structural and functional avidity. This chain is T cell receptor alpha variable 22, found in Homo sapiens (Human).